We begin with the raw amino-acid sequence, 361 residues long: ATP-dependent 6-phosphofructokinase 1 (361 aa).

ATP is bound by residues Gly14, Lys79–Gly80, and Gly116–Ser119. Asp117 is a binding site for Mg(2+). Residues Thr140 to Asp142, Arg177, Met184 to Arg186, Glu237, Arg278, and His284 to Arg287 each bind substrate. Residue Asp142 is the Proton acceptor of the active site.

Belongs to the phosphofructokinase type A (PFKA) family. Mixed-substrate PFK group III subfamily. Homodimer or homotetramer. Mg(2+) is required as a cofactor.

It is found in the cytoplasm. The catalysed reaction is beta-D-fructose 6-phosphate + ATP = beta-D-fructose 1,6-bisphosphate + ADP + H(+). The protein operates within carbohydrate degradation; glycolysis; D-glyceraldehyde 3-phosphate and glycerone phosphate from D-glucose: step 3/4. Functionally, catalyzes the phosphorylation of D-fructose 6-phosphate to fructose 1,6-bisphosphate by ATP, the first committing step of glycolysis. In Synechocystis sp. (strain ATCC 27184 / PCC 6803 / Kazusa), this protein is ATP-dependent 6-phosphofructokinase 1.